The following is a 715-amino-acid chain: Fatty acid oxidation complex subunit alpha (715 aa).

The enoyl-CoA hydratase stretch occupies residues 1-190; that stretch reads MTTTSAFMLN…KAGLVDDVVP (190 aa). A 3-hydroxyacyl-CoA dehydrogenase region spans residues 306 to 715; that stretch reads GPLNSVGILG…WTNGETDQGN (410 aa).

In the N-terminal section; belongs to the enoyl-CoA hydratase/isomerase family. It in the central section; belongs to the 3-hydroxyacyl-CoA dehydrogenase family. As to quaternary structure, heterotetramer of two alpha chains (FadJ) and two beta chains (FadI).

It is found in the cytoplasm. It carries out the reaction a (3S)-3-hydroxyacyl-CoA = a (2E)-enoyl-CoA + H2O. The enzyme catalyses a 4-saturated-(3S)-3-hydroxyacyl-CoA = a (3E)-enoyl-CoA + H2O. The catalysed reaction is a (3S)-3-hydroxyacyl-CoA + NAD(+) = a 3-oxoacyl-CoA + NADH + H(+). It catalyses the reaction (3S)-3-hydroxybutanoyl-CoA = (3R)-3-hydroxybutanoyl-CoA. It functions in the pathway lipid metabolism; fatty acid beta-oxidation. Functionally, catalyzes the formation of a hydroxyacyl-CoA by addition of water on enoyl-CoA. Also exhibits 3-hydroxyacyl-CoA epimerase and 3-hydroxyacyl-CoA dehydrogenase activities. This Salmonella enteritidis PT4 (strain P125109) protein is Fatty acid oxidation complex subunit alpha.